The primary structure comprises 288 residues: Probable ketoamine kinase VC_1539 (288 aa).

Position 92-94 (92-94 (NYL)) interacts with ATP. Asp195 (proton acceptor) is an active-site residue.

This sequence belongs to the fructosamine kinase family.

Functionally, ketoamine kinase that phosphorylates ketoamines on the third carbon of the sugar moiety to generate ketoamine 3-phosphate. This chain is Probable ketoamine kinase VC_1539, found in Vibrio cholerae serotype O1 (strain ATCC 39315 / El Tor Inaba N16961).